The chain runs to 156 residues: Small ribosomal subunit protein uS7 (156 aa).

The protein belongs to the universal ribosomal protein uS7 family. In terms of assembly, part of the 30S ribosomal subunit. Contacts proteins S9 and S11.

In terms of biological role, one of the primary rRNA binding proteins, it binds directly to 16S rRNA where it nucleates assembly of the head domain of the 30S subunit. Is located at the subunit interface close to the decoding center, probably blocks exit of the E-site tRNA. This Onion yellows phytoplasma (strain OY-M) protein is Small ribosomal subunit protein uS7.